Reading from the N-terminus, the 247-residue chain is ATP synthase subunit a, chloroplastic (247 aa).

A run of 5 helical transmembrane segments spans residues 38–58 (QVLITSWVVIAILLGSAALAV), 95–115 (VPFIGTIFLFIFVSNWSGALL), 134–154 (INTTVALALLTSVAYFYAGLA), 199–219 (LVVVVLVSLVPSVVPIPVMFL), and 220–240 (GLFTSGIQALIFATLAAAYIG).

It belongs to the ATPase A chain family. F-type ATPases have 2 components, CF(1) - the catalytic core - and CF(0) - the membrane proton channel. CF(1) has five subunits: alpha(3), beta(3), gamma(1), delta(1), epsilon(1). CF(0) has four main subunits: a, b, b' and c.

The protein localises to the plastid. Its subcellular location is the chloroplast thylakoid membrane. Its function is as follows. Key component of the proton channel; it plays a direct role in the translocation of protons across the membrane. This is ATP synthase subunit a, chloroplastic from Trachelium caeruleum (Blue throatwort).